The sequence spans 261 residues: MASSKLLSLALFLVLLTHANSATETSFNFPNFHTDDKLILQGDATISSKGQLRLTGVTPNGDPRVDSMGRAFYSDPIQIKDSNNVASFNTNFTFIIRTKNQSISAYGLAFALVRVNSPPQKKQEFLGIFNTNNPEPNARTVAVVFNTFKNRIDFDKNFIKPYVNENCDFHKYNGEKTDVQITYDSSNNDLRVFLHFTVSQVKCSVSATVHLEKEVDEWVSVGFSPTSGLTEDTTETHDVLSWSFSSKFRNKLSNILLNNIL.

The N-terminal stretch at 1-21 (MASSKLLSLALFLVLLTHANS) is a signal peptide. Asn91 and Asn100 each carry an N-linked (GlcNAc...) asparagine glycan. A disulfide bridge links Cys167 with Cys203.

It belongs to the leguminous lectin family. Monomer.

Its function is as follows. Seed storage. This carbohydrate-binding lectin has toxic effects on bean bruchid pests. The polypeptide is Arcelin-5B (ARC5B) (Phaseolus vulgaris (Kidney bean)).